The following is a 393-amino-acid chain: NAD(P)H-quinone oxidoreductase subunit H, chloroplastic (393 aa).

The protein belongs to the complex I 49 kDa subunit family. NDH is composed of at least 16 different subunits, 5 of which are encoded in the nucleus.

It is found in the plastid. The protein resides in the chloroplast thylakoid membrane. The catalysed reaction is a plastoquinone + NADH + (n+1) H(+)(in) = a plastoquinol + NAD(+) + n H(+)(out). It carries out the reaction a plastoquinone + NADPH + (n+1) H(+)(in) = a plastoquinol + NADP(+) + n H(+)(out). Its function is as follows. NDH shuttles electrons from NAD(P)H:plastoquinone, via FMN and iron-sulfur (Fe-S) centers, to quinones in the photosynthetic chain and possibly in a chloroplast respiratory chain. The immediate electron acceptor for the enzyme in this species is believed to be plastoquinone. Couples the redox reaction to proton translocation, and thus conserves the redox energy in a proton gradient. The protein is NAD(P)H-quinone oxidoreductase subunit H, chloroplastic of Nuphar advena (Common spatterdock).